Here is a 586-residue protein sequence, read N- to C-terminus: A-type ATP synthase subunit A (586 aa).

Residue 232-239 (GPFGSGKT) participates in ATP binding.

Belongs to the ATPase alpha/beta chains family. Has multiple subunits with at least A(3), B(3), C, D, E, F, H, I and proteolipid K(x).

The protein localises to the cell membrane. It catalyses the reaction ATP + H2O + 4 H(+)(in) = ADP + phosphate + 5 H(+)(out). Component of the A-type ATP synthase that produces ATP from ADP in the presence of a proton gradient across the membrane. The A chain is the catalytic subunit. The protein is A-type ATP synthase subunit A of Methanococcus maripaludis (strain C7 / ATCC BAA-1331).